Consider the following 502-residue polypeptide: Nondiscriminating glutamyl-tRNA synthetase EARS2, mitochondrial (502 aa).

Residues 1 to 20 (MAGMLREVCGAAASGLRVRF) constitute a mitochondrion transit peptide. L-glutamate is bound at residue 19–21 (RFG). The short motif at 24–32 (PTGFLHLGG) is the 'HIGH' region element. An ATP-binding site is contributed by histidine 29. L-glutamate-binding positions include glutamate 55, 207–211 (YHLAN), and arginine 225. Residues glutamate 228 and 263–267 (KLSKR) contribute to the ATP site. The 'KMSKS' region motif lies at 263–267 (KLSKR).

It belongs to the class-I aminoacyl-tRNA synthetase family. Glutamate--tRNA ligase type 1 subfamily.

It localises to the mitochondrion matrix. It carries out the reaction tRNA(Glx) + L-glutamate + ATP = L-glutamyl-tRNA(Glx) + AMP + diphosphate. The catalysed reaction is tRNA(Glu) + L-glutamate + ATP = L-glutamyl-tRNA(Glu) + AMP + diphosphate. It catalyses the reaction tRNA(Gln) + L-glutamate + ATP = L-glutamyl-tRNA(Gln) + AMP + diphosphate. Non-discriminating glutamyl-tRNA synthetase that catalyzes aminoacylation of both mitochondrial tRNA(Glu) and tRNA(Gln) and participates in RNA aminoacylation for mitochondrial protein translation. Attachs glutamate to tRNA(Glu) or tRNA(Gln) in a two-step reaction: glutamate is first activated by ATP to form Glu-AMP and then transferred to the acceptor end of tRNA(Glu) or tRNA(Gln). The protein is Nondiscriminating glutamyl-tRNA synthetase EARS2, mitochondrial of Gallus gallus (Chicken).